The chain runs to 1267 residues: DNA-directed RNA polymerase subunit beta (1267 aa).

This sequence belongs to the RNA polymerase beta chain family. The RNAP catalytic core consists of 2 alpha, 1 beta, 1 beta' and 1 omega subunit. When a sigma factor is associated with the core the holoenzyme is formed, which can initiate transcription.

The catalysed reaction is RNA(n) + a ribonucleoside 5'-triphosphate = RNA(n+1) + diphosphate. Functionally, DNA-dependent RNA polymerase catalyzes the transcription of DNA into RNA using the four ribonucleoside triphosphates as substrates. This is DNA-directed RNA polymerase subunit beta (rpoB) from Carsonella ruddii (strain PV).